Reading from the N-terminus, the 258-residue chain is Thymidylate synthase (258 aa).

A dUMP-binding site is contributed by arginine 21. Histidine 51 contacts (6R)-5,10-methylene-5,6,7,8-tetrahydrofolate. 121–122 (RR) contacts dUMP. Cysteine 141 serves as the catalytic Nucleophile. DUMP-binding positions include 161–164 (RSAD), asparagine 172, and 202–204 (HLY). Position 164 (aspartate 164) interacts with (6R)-5,10-methylene-5,6,7,8-tetrahydrofolate. Alanine 257 lines the (6R)-5,10-methylene-5,6,7,8-tetrahydrofolate pocket.

Belongs to the thymidylate synthase family. Bacterial-type ThyA subfamily. In terms of assembly, homodimer.

It localises to the cytoplasm. It catalyses the reaction dUMP + (6R)-5,10-methylene-5,6,7,8-tetrahydrofolate = 7,8-dihydrofolate + dTMP. It functions in the pathway pyrimidine metabolism; dTTP biosynthesis. Its function is as follows. Catalyzes the reductive methylation of 2'-deoxyuridine-5'-monophosphate (dUMP) to 2'-deoxythymidine-5'-monophosphate (dTMP) while utilizing 5,10-methylenetetrahydrofolate (mTHF) as the methyl donor and reductant in the reaction, yielding dihydrofolate (DHF) as a by-product. This enzymatic reaction provides an intracellular de novo source of dTMP, an essential precursor for DNA biosynthesis. This Dichelobacter nodosus (strain VCS1703A) protein is Thymidylate synthase.